The following is a 959-amino-acid chain: MALLGKRCDVPTNGCGPDRWNSAFTRKDEIITSLVSALDSMCSALSKLNAEVACVAVHDESAFVVGTEKGRMFLNARKELQSDFLRFCRGPPWKDPEAEHPKKVQRGEGGGRSLPRSSLEHGSDVYLLRKMVEEVFDVLYSEALGRASVVPLPYERLLREPGLLAVQGLPEGLAFRRPAEYDPKALMAILEHSHRIRFKLKRPLEDGGRDSKALVELNGVSLIPKGSRDCGLHGQAPKVPPQDLPPTATSSSMASFLYSTALPNHAIRELKQEAPSCPLAPSDLGLSRPMPEPKATGAQDFSDCCGQKPTGPGGPLIQNVHASKRILFSIVHDKSEKWDAFIKETEDINTLRECVQILFNSRYAEALGLDHMVPVPYRKIACDPEAVEIVGIPDKIPFKRPCTYGVPKLKRILEERHSIHFIIKRMFDERIFTGNKFTKDTTKLEPASPPEDTSAEVSRATVLDLAGNARSDKGSMSEDCGPGTSGELGGLRPIKIEPEDLDIIQVTVPDPSPTSEEMTDSMPGHLPSEDSGYGMEMLTDKGLSEDARPEERPVEDSHGDVIRPLRKQVELLFNTRYAKAIGISEPVKVPYSKFLMHPEELFVVGLPEGISLRRPNCFGIAKLRKILEASNSIQFVIKRPELLTEGVKEPIMDSQGTASSLGFSPPALPPERDSGDPLVDESLKRQGFQENYDARLSRIDIANTLREQVQDLFNKKYGEALGIKYPVQVPYKRIKSNPGSVIIEGLPPGIPFRKPCTFGSQNLERILAVADKIKFTVTRPFQGLIPKPDEDDANRLGEKVILREQVKELFNEKYGEALGLNRPVLVPYKLIRDSPDAVEVTGLPDDIPFRNPNTYDIHRLEKILKAREHVRMVIINQLQPFAEICNDAKVPAKDSSIPKRKRKRVSEGNSVSSSSSSSSSSSSNPDSVASANQISLVQWPMYMVDYAGLNVQLPGPLNY.

Glycyl lysine isopeptide (Lys-Gly) (interchain with G-Cter in SUMO2) cross-links involve residues K27 and K94. Residues 96-106 show a composition bias toward basic and acidic residues; sequence PEAEHPKKVQR. Positions 96–117 are disordered; it reads PEAEHPKKVQRGEGGGRSLPRS. Residues 119 to 213 form a GTF2I-like 1 repeat; it reads LEHGSDVYLL…LEDGGRDSKA (95 aa). Glycyl lysine isopeptide (Lys-Gly) (interchain with G-Cter in SUMO2) cross-links involve residues K184, K212, K225, K238, K271, K294, K308, K337, K436, K439, and K443. Positions 230–250 are disordered; it reads CGLHGQAPKVPPQDLPPTATS. A GTF2I-like 2 repeat occupies 342–436; it reads IKETEDINTL…FDERIFTGNK (95 aa). Phosphoserine is present on S448. Positions 468–492 are disordered; sequence NARSDKGSMSEDCGPGTSGELGGLR. The GTF2I-like 3 repeat unit spans residues 556–650; that stretch reads DSHGDVIRPL…ELLTEGVKEP (95 aa). Residues K567, K579, K588, K622, K638, and K648 each participate in a glycyl lysine isopeptide (Lys-Gly) (interchain with G-Cter in SUMO2) cross-link. Position 654 is a phosphoserine (S654). Positions 654-679 are disordered; it reads SQGTASSLGFSPPALPPERDSGDPLV. Glycyl lysine isopeptide (Lys-Gly) (interchain with G-Cter in SUMO2) cross-links involve residues P669, P670, D680, and K684. The residue at position 686 (Q686) is a Phosphoserine. GTF2I-like repeat units follow at residues 696–790 and 793–887; these read LSRI…KPDE and ANRL…ICND. Glycyl lysine isopeptide (Lys-Gly) (interchain with G-Cter in SUMO2) cross-links involve residues I701, K724, K732, K772, K774, K787, K829, K889, and K893. Positions 892–927 are disordered; the sequence is AKDSSIPKRKRKRVSEGNSVSSSSSSSSSSSSNPDS. The Nuclear localization signal motif lies at 898–905; that stretch reads PKRKRKRV. The segment covering 910-923 has biased composition (low complexity); that stretch reads SVSSSSSSSSSSSS.

This sequence belongs to the TFII-I family. Interacts with the retinoblastoma protein (RB1) via its C-terminus. As to expression, highly expressed in adult skeletal muscle, heart, fibroblast, bone and fetal tissues. Expressed at lower levels in all other tissues tested.

The protein resides in the nucleus. In terms of biological role, may be a transcription regulator involved in cell-cycle progression and skeletal muscle differentiation. May repress GTF2I transcriptional functions, by preventing its nuclear residency, or by inhibiting its transcriptional activation. May contribute to slow-twitch fiber type specificity during myogenesis and in regenerating muscles. Binds troponin I slow-muscle fiber enhancer (USE B1). Binds specifically and with high affinity to the EFG sequences derived from the early enhancer of HOXC8. This is General transcription factor II-I repeat domain-containing protein 1 (GTF2IRD1) from Homo sapiens (Human).